Consider the following 299-residue polypeptide: Deoxyribonuclease-1-like 2 (299 aa).

The N-terminal stretch at 1–20 (MGGPRALLAALWALEAAGTA) is a signal peptide. Catalysis depends on residues Glu-99 and His-170. Cys-209 and Cys-245 form a disulfide bridge.

This sequence belongs to the DNase I family. It depends on Mg(2+) as a cofactor. Ca(2+) serves as cofactor. As to expression, preferentially expressed in the skin and up-regulated during keratinocytes differentiation. Highly abundant (at protein level) in the stratum granulosum.

It is found in the cytoplasm. Its subcellular location is the secreted. Functionally, divalent cation-dependent acid DNA endonuclease involved in the breakdown of the nucleus during corneocyte formation of epidermal keratinocytes. May play an immune role by eliminating harmful DNA released into the extracellular environment by damaged epidermal cells. The protein is Deoxyribonuclease-1-like 2 (DNASE1L2) of Homo sapiens (Human).